The following is a 486-amino-acid chain: Keratin-3, type I cytoskeletal 51 kDa (486 aa).

Residues 1 to 125 are head; that stretch reads MSNYSIKQSA…AGGMDIFSTN (125 aa). Residues 126 to 161 form a coil 1A region; sequence EKQTMQNLNDRLASYLDKVHALETANTELERKIKEW. In terms of domain architecture, IF rod spans 126–442; sequence EKQTMQNLND…RLLDGDLSKP (317 aa). A linker 1 region spans residues 162–184; that stretch reads YEKQRPGSSSGDGAKDYSKYYTM. The coil 1B stretch occupies residues 185 to 276; it reads INDLKNQIIA…KNHEDELKGM (92 aa). The linker 12 stretch occupies residues 277–299; sequence QVTQVGQVNVEMNAAPSSDLTKI. Residues 300–438 form a coil 2 region; sequence LNDMRSQYED…ETYRRLLDGD (139 aa). The segment at 435–466 is disordered; the sequence is LDGDLSKPKSGGGTSTNTGSTSSKGSTRTVKR. The segment at 439-486 is tail; sequence LSKPKSGGGTSTNTGSTSSKGSTRTVKRREIIEEVVDGKVVSTKVVDM. The span at 449–461 shows a compositional bias: low complexity; the sequence is STNTGSTSSKGST.

Belongs to the intermediate filament family. Heterotetramer of two type I and two type II keratins.

The sequence is that of Keratin-3, type I cytoskeletal 51 kDa from Xenopus laevis (African clawed frog).